A 55-amino-acid chain; its full sequence is Large ribosomal subunit protein bL33C (55 aa).

It belongs to the bacterial ribosomal protein bL33 family.

The chain is Large ribosomal subunit protein bL33C from Kineococcus radiotolerans (strain ATCC BAA-149 / DSM 14245 / SRS30216).